The following is a 237-amino-acid chain: Uridylate kinase (237 aa).

ATP is bound at residue 9–12 (KLSG). The tract at residues 17 to 22 (GSQGYG) is involved in allosteric activation by GTP. Residue Gly-51 participates in UMP binding. Gly-52 and Arg-56 together coordinate ATP. Residues Asp-71 and 132–139 (CGNPFFTT) each bind UMP. ATP-binding residues include Thr-159, Tyr-165, and Asp-168.

Belongs to the UMP kinase family. Homohexamer.

The protein resides in the cytoplasm. The catalysed reaction is UMP + ATP = UDP + ADP. It functions in the pathway pyrimidine metabolism; CTP biosynthesis via de novo pathway; UDP from UMP (UMPK route): step 1/1. With respect to regulation, allosterically activated by GTP. Inhibited by UTP. In terms of biological role, catalyzes the reversible phosphorylation of UMP to UDP. The protein is Uridylate kinase of Synechococcus sp. (strain CC9902).